We begin with the raw amino-acid sequence, 326 residues long: Balbiani ring protein 1 (326 aa).

A compositionally biased stretch (low complexity) spans 1–33 (PSKSGPRPSKSGPRPSKSGPRPSKSGPRPSKSG). The interval 1–119 (PSKSGPRPSK…RESPVCDDAM (119 aa)) is disordered. Basic and acidic residues predominate over residues 34 to 51 (PRPEKCGSAMRKAEAEKC). A compositionally biased stretch (low complexity) spans 93–102 (VTPTPEVPTT). A compositionally biased stretch (basic and acidic residues) spans 107–119 (SESRESPVCDDAM).

As to expression, salivary gland.

It localises to the secreted. Its function is as follows. Used by the larvae to construct a supramolecular structure, the larval tube. This chain is Balbiani ring protein 1 (BR1), found in Chironomus pallidivittatus (Midge).